The following is a 112-amino-acid chain: Colipase (112 aa).

A signal peptide spans 1-17; the sequence is MEKVLALLLVTLTVAYA. Residues 18 to 22 constitute a propeptide, enterostatin, activation peptide; the sequence is VPDPR. 5 disulfides stabilise this stretch: Cys-34–Cys-45, Cys-40–Cys-56, Cys-44–Cys-78, Cys-66–Cys-86, and Cys-80–Cys-104.

It belongs to the colipase family. Forms a 1:1 stoichiometric complex with pancreatic lipase. Expressed by the pancreas.

The protein localises to the secreted. In terms of biological role, colipase is a cofactor of pancreatic lipase. It allows the lipase to anchor itself to the lipid-water interface. Without colipase the enzyme is washed off by bile salts, which have an inhibitory effect on the lipase. Enterostatin has a biological activity as a satiety signal. The polypeptide is Colipase (CLPS) (Sus scrofa (Pig)).